The primary structure comprises 240 residues: MRRCSLCAFDAARGPRRLMRVGLALILVGHVNLLLGAVLHGTVLRHVANPRGAVTPEYTVANVISVGSGLLSVSVGLVALLASRNLLRPPLHWVLLALALVNLLLSVACSLGLLLAVSLTVANGGRRLIADCHPGLLDPLVPLDEGPGHTDCPFDPTRIYDTALALWIPSLLMSAGEAALSGYCCVAALTLRGVGPCRKDGLQGQLEEMTELESPKCKRQENEQLLDQNQEIRASQRSWV.

4 helical membrane-spanning segments follow: residues valine 21–glycine 41, valine 63–serine 83, valine 94–leucine 114, and alanine 163–tyrosine 183.

Belongs to the TMEM54 family. In terms of tissue distribution, expressed in skin, pancreas and keratinocytes.

The protein localises to the membrane. This is Keratinocyte-associated protein 3 (KRTCAP3) from Homo sapiens (Human).